We begin with the raw amino-acid sequence, 466 residues long: Flagellum-specific ATP synthase (466 aa).

194 to 201 (SSSGLGKS) contacts ATP.

Belongs to the ATPase alpha/beta chains family.

Its subcellular location is the cytoplasm. The catalysed reaction is ATP + H2O + 4 H(+)(in) = ADP + phosphate + 5 H(+)(out). In terms of biological role, probable catalytic subunit of a protein translocase for flagellum-specific export, or a proton translocase involved in local circuits at the flagellum. May be involved in a specialized protein export pathway that proceeds without signal peptide cleavage. This is Flagellum-specific ATP synthase (fliI) from Buchnera aphidicola subsp. Schizaphis graminum (strain Sg).